The sequence spans 96 residues: Co-chaperonin GroES (96 aa).

It belongs to the GroES chaperonin family. As to quaternary structure, heptamer of 7 subunits arranged in a ring. Interacts with the chaperonin GroEL.

The protein localises to the cytoplasm. Together with the chaperonin GroEL, plays an essential role in assisting protein folding. The GroEL-GroES system forms a nano-cage that allows encapsulation of the non-native substrate proteins and provides a physical environment optimized to promote and accelerate protein folding. GroES binds to the apical surface of the GroEL ring, thereby capping the opening of the GroEL channel. This Shewanella halifaxensis (strain HAW-EB4) protein is Co-chaperonin GroES.